We begin with the raw amino-acid sequence, 508 residues long: Acyl-CoA-binding domain-containing protein 5 (508 aa).

The ACB domain maps to 44–133; it reads YETRFEAAVK…MKKIIETMPM (90 aa). An acyl-CoA-binding positions include 55–64, 75–79, Lys101, and Tyr120; these read IQSLPKNGSF and YSFYK. The segment at 175-215 is disordered; that stretch reads AKAVNGKAESSDSGAESEEEEAQEELKGAEQSGSDDKKTLK. A coiled-coil region spans residues 181–214; that stretch reads KAESSDSGAESEEEEAQEELKGAEQSGSDDKKTL. 6 positions are modified to phosphoserine: Ser184, Ser185, Ser187, Ser191, Ser206, and Ser233. Residues 198-215 are compositionally biased toward basic and acidic residues; it reads EELKGAEQSGSDDKKTLK. The span at 240 to 260 shows a compositional bias: basic and acidic residues; the sequence is SDIHTDSSRSTRSSEDEKPGD. A disordered region spans residues 240 to 300; it reads SDIHTDSSRS…LTSDSDSEVY (61 aa). A Phosphoserine modification is found at Ser303. 2 disordered regions span residues 318-340 and 353-419; these read PTQH…NGSI and EVKH…RGSR. Basic and acidic residues predominate over residues 353–376; that stretch reads EVKHGGEDGRSSSGAPHRETRGGE. Ser405 carries the phosphoserine modification. A compositionally biased stretch (basic and acidic residues) spans 408 to 418; the sequence is DGERWGSDRGS. Residues 428-453 adopt a coiled-coil conformation; the sequence is LVLIRLQEDMQNVLQRLHKLETLTAS. Residue Lys446 is modified to N6-acetyllysine. A helical membrane pass occupies residues 480 to 500; it reads GALAFAIIWPFIAQWLAHLYY.

Belongs to the ATG37 family.

The protein resides in the peroxisome membrane. Acyl-CoA binding protein which acts as the peroxisome receptor for pexophagy but is dispensable for aggrephagy and nonselective autophagy. Binds medium- and long-chain acyl-CoA esters. The protein is Acyl-CoA-binding domain-containing protein 5 (Acbd5) of Mus musculus (Mouse).